Reading from the N-terminus, the 252-residue chain is Demethylmenaquinone methyltransferase (252 aa).

Residues Thr-64, Asp-85, and 112–113 each bind S-adenosyl-L-methionine; that span reads NA.

Belongs to the class I-like SAM-binding methyltransferase superfamily. MenG/UbiE family.

It carries out the reaction a 2-demethylmenaquinol + S-adenosyl-L-methionine = a menaquinol + S-adenosyl-L-homocysteine + H(+). It participates in quinol/quinone metabolism; menaquinone biosynthesis; menaquinol from 1,4-dihydroxy-2-naphthoate: step 2/2. Its function is as follows. Methyltransferase required for the conversion of demethylmenaquinol (DMKH2) to menaquinol (MKH2). This is Demethylmenaquinone methyltransferase from Lactococcus lactis subsp. lactis (strain IL1403) (Streptococcus lactis).